A 201-amino-acid polypeptide reads, in one-letter code: uncharacterized protein (201 aa).

Residues 1–19 (MKLIVSVFLIGCQFLNILG) form the signal peptide.

This is an uncharacterized protein from Acheta domesticus (House cricket).